A 238-amino-acid polypeptide reads, in one-letter code: Orotidine 5'-phosphate decarboxylase (238 aa).

Substrate-binding positions include Asp10, Lys32, 59–68, Thr122, Arg184, Gln193, Gly213, and Arg214; that span reads DLKLHDIPNT. Lys61 serves as the catalytic Proton donor.

Belongs to the OMP decarboxylase family. Type 1 subfamily. Homodimer.

It carries out the reaction orotidine 5'-phosphate + H(+) = UMP + CO2. It functions in the pathway pyrimidine metabolism; UMP biosynthesis via de novo pathway; UMP from orotate: step 2/2. Its function is as follows. Catalyzes the decarboxylation of orotidine 5'-monophosphate (OMP) to uridine 5'-monophosphate (UMP). In Bacillus anthracis (strain A0248), this protein is Orotidine 5'-phosphate decarboxylase.